Here is a 507-residue protein sequence, read N- to C-terminus: Efflux pump ustT (507 aa).

Helical transmembrane passes span 59–79 (IAVV…IIVA), 146–166 (LLIA…VTWF), 180–200 (IWQL…AMIA), 216–236 (HAAV…LANF), 240–260 (IPVF…YVVV), 316–336 (VLLI…SGIT), 359–379 (AGVN…ILVK), 398–418 (VCLI…TLVF), 421–441 (TVFA…TGMV), 449–469 (VFTG…PMLA), and 481–501 (IWVG…LGAI).

This sequence belongs to the major facilitator superfamily.

It localises to the cell membrane. It functions in the pathway mycotoxin biosynthesis. Functionally, efflux pump; part of the gene cluster that mediates the biosynthesis of the secondary metabolite ustiloxin B, an antimitotic tetrapeptide. Probably involved in self-resistance through the export of ustiloxin B. The polypeptide is Efflux pump ustT (Aspergillus flavus (strain ATCC 200026 / FGSC A1120 / IAM 13836 / NRRL 3357 / JCM 12722 / SRRC 167)).